The primary structure comprises 81 residues: Acyl carrier protein (81 aa).

The region spanning 2-77 is the Carrier domain; it reads ASIEERVVDI…EAIDFIEKEK (76 aa). Serine 37 is subject to O-(pantetheine 4'-phosphoryl)serine.

Belongs to the acyl carrier protein (ACP) family. 4'-phosphopantetheine is transferred from CoA to a specific serine of apo-ACP by AcpS. This modification is essential for activity because fatty acids are bound in thioester linkage to the sulfhydryl of the prosthetic group.

Its subcellular location is the cytoplasm. Its pathway is lipid metabolism; fatty acid biosynthesis. In terms of biological role, carrier of the growing fatty acid chain in fatty acid biosynthesis. The protein is Acyl carrier protein of Rhodopirellula baltica (strain DSM 10527 / NCIMB 13988 / SH1).